We begin with the raw amino-acid sequence, 514 residues long: Uronyl 2-sulfotransferase homolog pip (514 aa).

The Cytoplasmic portion of the chain corresponds to 1-30; the sequence is MSLNAERSYKMKLRDVENAFKYRRIPYPKR. The chain crosses the membrane as a helical; Signal-anchor for type II membrane protein span at residues 31 to 50; it reads SVELIALLAISCTFFLFMHT. Residues 51-514 lie on the Lumenal side of the membrane; the sequence is NKLNSRLKEM…EQQNEYNEDY (464 aa). The segment covering 112-121 has biased composition (basic and acidic residues); it reads HDRRSSEEQL. The disordered stretch occupies residues 112-185; that stretch reads HDRRSSEEQL…DEDEVEENDD (74 aa). Positions 127 to 140 are enriched in basic residues; sequence HGHHHDHHSHHHHM. Residues 155-170 are compositionally biased toward basic and acidic residues; it reads HDKQLAVPDNKHKEDE. Positions 171-185 are enriched in acidic residues; the sequence is VHYEDDEDEVEENDD. A glycan (N-linked (GlcNAc...) asparagine) is linked at N207. Residue H282 is part of the active site. Residues N287, N416, N451, and N467 are each glycosylated (N-linked (GlcNAc...) asparagine).

The protein belongs to the sulfotransferase 3 family. Interacts with wbl/windbeutel; the interaction is direct and does not require pip to be folded. In terms of tissue distribution, ovary-specific. Specifically expressed in the ventral follicle cells of stage 9-10 egg chambers. Expressed in ovaries. Specifically expressed in the ventral follicle cells of stage 9-10 egg chambers.

It localises to the golgi apparatus membrane. Sulfotransferase involved in dorsoventral axis patterning in early embryos. Required for the ventral activation of ea/easter by the protease snk in the perivitelline space between the embryonic membrane and the eggshell; activation of ea requires both activation of the ndl-gd-snk protease cascade and sulfation of a vitelline membrane component by pip. Probably acts by mediating the sulfation of some glycoprotein or glycosaminoglycan stably deposited in the vitelline membrane, whose ventrally localized modification leads to spatially restricted activation of the protease cascade resulting in localized activation of the spz Toll receptor ligand by ea. Its function is as follows. Probably required redundantly with isoform H for dorsoventral axis patterning in embryos. Lacks 2-O-sulfotransferase activity towards completely desulfated N-sulfated (CDSNS) heparin, chondroitin, and chondroitin sulfate A, B (dermatan sulfate), and C. Sulfates several components of the eggshell vitelline membrane, including Vml, Vm26Aa, Vm32E and psd/palisade/Fcp26Aa. In terms of biological role, probably required redundantly with isoform A for dorsoventral axis patterning in embryos. Functionally, lacks 2-O-sulfotransferase activity towards CDSNS heparin, chondroitin, and chondroitin sulfate A, B (dermatan sulfate), and C. This Drosophila melanogaster (Fruit fly) protein is Uronyl 2-sulfotransferase homolog pip.